Consider the following 753-residue polypeptide: 5-methyltetrahydropteroyltriglutamate--homocysteine methyltransferase (753 aa).

5-methyltetrahydropteroyltri-L-glutamate contacts are provided by residues 17–20 (RELK) and Lys117. Residues 431–433 (IGS) and Glu484 contribute to the L-homocysteine site. L-methionine contacts are provided by residues 431-433 (IGS) and Glu484. Residues 515–516 (RC) and Trp561 each bind 5-methyltetrahydropteroyltri-L-glutamate. Asp599 serves as a coordination point for L-homocysteine. L-methionine is bound at residue Asp599. Glu605 lines the 5-methyltetrahydropteroyltri-L-glutamate pocket. Zn(2+) contacts are provided by His641, Cys643, and Glu665. His694 functions as the Proton donor in the catalytic mechanism. Cys726 is a binding site for Zn(2+).

The protein belongs to the vitamin-B12 independent methionine synthase family. Zn(2+) serves as cofactor.

It catalyses the reaction 5-methyltetrahydropteroyltri-L-glutamate + L-homocysteine = tetrahydropteroyltri-L-glutamate + L-methionine. It participates in amino-acid biosynthesis; L-methionine biosynthesis via de novo pathway; L-methionine from L-homocysteine (MetE route): step 1/1. Functionally, catalyzes the transfer of a methyl group from 5-methyltetrahydrofolate to homocysteine resulting in methionine formation. The sequence is that of 5-methyltetrahydropteroyltriglutamate--homocysteine methyltransferase from Shigella boydii serotype 18 (strain CDC 3083-94 / BS512).